Reading from the N-terminus, the 363-residue chain is AA9 family lytic polysaccharide monooxygenase I (363 aa).

Residues 1–19 (MSLFKFAAFVLGTAGSVAG) form the signal peptide. Residues H20 and H105 each coordinate Cu(2+). 2 disulfide bridges follow: C75/C197 and C116/C120. O2-binding residues include H183 and Q192. Y194 is a binding site for Cu(2+). A compositionally biased stretch (polar residues) spans 248 to 257 (GSDSNTATSG). Disordered regions lie at residues 248 to 270 (GSDS…PTTT) and 298 to 363 (SVSY…RTQS). Over residues 258-270 (ASPPSTNFSPTTT) the composition is skewed to low complexity. Over residues 298 to 307 (SVSYSQTPWP) the composition is skewed to polar residues. The segment covering 308 to 329 (SSTATEATSASSSAGGSNNGHT) has biased composition (low complexity). The span at 342–354 (TGKKRSRLNRRRM) shows a compositional bias: basic residues.

Belongs to the polysaccharide monooxygenase AA9 family. The cofactor is Cu(2+).

The protein localises to the secreted. The enzyme catalyses [(1-&gt;4)-beta-D-glucosyl]n+m + reduced acceptor + O2 = 4-dehydro-beta-D-glucosyl-[(1-&gt;4)-beta-D-glucosyl]n-1 + [(1-&gt;4)-beta-D-glucosyl]m + acceptor + H2O.. Lytic polysaccharide monooxygenase (LPMO) that depolymerizes crystalline and amorphous polysaccharides via the oxidation of scissile alpha- or beta-(1-4)-glycosidic bonds, yielding C1 or C4 oxidation products. Catalysis by LPMOs requires the reduction of the active-site copper from Cu(II) to Cu(I) by a reducing agent and H(2)O(2) or O(2) as a cosubstrate. In Emericella nidulans (strain FGSC A4 / ATCC 38163 / CBS 112.46 / NRRL 194 / M139) (Aspergillus nidulans), this protein is AA9 family lytic polysaccharide monooxygenase I.